Reading from the N-terminus, the 145-residue chain is Synaptojanin-2-binding protein (145 aa).

The Cytoplasmic portion of the chain corresponds to 1 to 117 (MNGRVDYLVT…VHRGEGEPSG (117 aa)). Residues 13-100 (EINLTRGPSG…AVSLRVQHRL (88 aa)) form the PDZ domain. Residues 118–138 (VPVAMVLLPVFALTMVAVWAF) form a helical; Anchor for type IV membrane protein membrane-spanning segment. Topologically, residues 139 to 145 (VRYRKQL) are mitochondrial intermembrane.

Binds (via the PDZ domain) to isoform 2A of SYNJ2 (via the unique motif in the C-terminus). Interacts (via C-terminus) with RALBP1. Interacts (via PDZ domain) with ACVR2A (via C-terminus) and ACVR2B (via C-terminus). Forms a ternary complex with ACVR2A and RALBP1. Interacts with MAPK12. Interacts with DLL1; enhances DLL1 protein stability, and promotes notch signaling in endothelial cells. As to expression, isoform 1 and isoform 2 are widely expressed, notably in brain, heart, lung, liver, kidney, skeletal muscle, ovary and testis. Isoform 3 is detected only in heart, spleen and testis.

The protein resides in the mitochondrion outer membrane. The protein localises to the cytoplasm. It is found in the perinuclear region. In terms of biological role, isoform 1 regulates endocytosis of activin type 2 receptor kinases through the Ral/RALBP1-dependent pathway and may be involved in suppression of activin-induced signal transduction. Isoform 2 and isoform 3 show a stimulatory affect on activin-induced signal transduction and enhance activin type 2 expression at the cell surface. This chain is Synaptojanin-2-binding protein, found in Mus musculus (Mouse).